The primary structure comprises 308 residues: Transcriptional adapter 1-2 (308 aa).

The protein belongs to the TADA1 family. In terms of assembly, component of the Spt-Ada-Gcn5 acetyltransferase (SAGA) complex consisting of wda/Taf5L, Saf6, Taf9, Taf10b, Taf12, Ada1, Spt3, Spt7, Spt20, Sf3b3, Sf3b5, Nipped-A/Tra1, a histone acetyltransferase (HAT) module made up of Gcn5, Ada2b (Isoform B), Ada3 and Sgf29, and a deubiquitinase (DUB) module made up of not/nonstop, Sgf11 and e(y)2 tethered to SAGA by Atxn7. Not a component of the Ada2a-containing ATAC complex.

The protein resides in the nucleus. Its function is as follows. Component of the transcription regulatory complex SAGA, a multiprotein complex that activates transcription by remodeling chromatin and mediating histone acetylation and deubiquitination. The SAGA complex predominantly acetylates histone H3. The sequence is that of Transcriptional adapter 1-2 from Drosophila melanogaster (Fruit fly).